Consider the following 325-residue polypeptide: Probable cell division protein WhiA (325 aa).

The H-T-H motif DNA-binding region spans 273-306; the sequence is SLEELGALADPPLTKDAVAGRIRRLLALADKRAN.

It belongs to the WhiA family.

Functionally, involved in cell division and chromosome segregation. In Frankia casuarinae (strain DSM 45818 / CECT 9043 / HFP020203 / CcI3), this protein is Probable cell division protein WhiA.